Consider the following 183-residue polypeptide: Large ribosomal subunit protein uL5 (183 aa).

The protein belongs to the universal ribosomal protein uL5 family. As to quaternary structure, part of the 50S ribosomal subunit; part of the 5S rRNA/L5/L18/L25 subcomplex. Contacts the 5S rRNA and the P site tRNA. Forms a bridge to the 30S subunit in the 70S ribosome.

In terms of biological role, this is one of the proteins that bind and probably mediate the attachment of the 5S RNA into the large ribosomal subunit, where it forms part of the central protuberance. In the 70S ribosome it contacts protein S13 of the 30S subunit (bridge B1b), connecting the 2 subunits; this bridge is implicated in subunit movement. Contacts the P site tRNA; the 5S rRNA and some of its associated proteins might help stabilize positioning of ribosome-bound tRNAs. The protein is Large ribosomal subunit protein uL5 of Chlorobaculum tepidum (strain ATCC 49652 / DSM 12025 / NBRC 103806 / TLS) (Chlorobium tepidum).